Here is a 214-residue protein sequence, read N- to C-terminus: Probable DNA (cytosine-5)-methyltransferase (214 aa).

Residue cysteine 62 is part of the active site.

The protein belongs to the class I-like SAM-binding methyltransferase superfamily. C5-methyltransferase family. As to quaternary structure, probably requires another subunit for function.

It catalyses the reaction a 2'-deoxycytidine in DNA + S-adenosyl-L-methionine = a 5-methyl-2'-deoxycytidine in DNA + S-adenosyl-L-homocysteine + H(+). This is probably the methylase that recognizes and modifies 5'-CpG-3'. The sequence is that of Probable DNA (cytosine-5)-methyltransferase from Dryophytes versicolor (chameleon treefrog).